The sequence spans 80 residues: Putative membrane protein insertion efficiency factor (80 aa).

It belongs to the UPF0161 family.

It localises to the cell membrane. In terms of biological role, could be involved in insertion of integral membrane proteins into the membrane. The sequence is that of Putative membrane protein insertion efficiency factor from Corynebacterium jeikeium (strain K411).